The sequence spans 178 residues: ATP synthase subunit delta (178 aa).

The protein belongs to the ATPase delta chain family. As to quaternary structure, F-type ATPases have 2 components, F(1) - the catalytic core - and F(0) - the membrane proton channel. F(1) has five subunits: alpha(3), beta(3), gamma(1), delta(1), epsilon(1). F(0) has three main subunits: a(1), b(2) and c(10-14). The alpha and beta chains form an alternating ring which encloses part of the gamma chain. F(1) is attached to F(0) by a central stalk formed by the gamma and epsilon chains, while a peripheral stalk is formed by the delta and b chains.

It localises to the cell inner membrane. In terms of biological role, f(1)F(0) ATP synthase produces ATP from ADP in the presence of a proton or sodium gradient. F-type ATPases consist of two structural domains, F(1) containing the extramembraneous catalytic core and F(0) containing the membrane proton channel, linked together by a central stalk and a peripheral stalk. During catalysis, ATP synthesis in the catalytic domain of F(1) is coupled via a rotary mechanism of the central stalk subunits to proton translocation. This protein is part of the stalk that links CF(0) to CF(1). It either transmits conformational changes from CF(0) to CF(1) or is implicated in proton conduction. The protein is ATP synthase subunit delta of Methylococcus capsulatus (strain ATCC 33009 / NCIMB 11132 / Bath).